The chain runs to 215 residues: Large ribosomal subunit protein uL3 (215 aa).

A disordered region spans residues glycine 136–lysine 155. Residue glutamine 151 is modified to N5-methylglutamine.

This sequence belongs to the universal ribosomal protein uL3 family. Part of the 50S ribosomal subunit. Forms a cluster with proteins L14 and L19. Methylated by PrmB.

Its function is as follows. One of the primary rRNA binding proteins, it binds directly near the 3'-end of the 23S rRNA, where it nucleates assembly of the 50S subunit. The polypeptide is Large ribosomal subunit protein uL3 (Rickettsia typhi (strain ATCC VR-144 / Wilmington)).